Here is a 479-residue protein sequence, read N- to C-terminus: Cardiolipin synthase A (479 aa).

The next 2 membrane-spanning stretches (helical) occupy residues 8–28 and 38–58; these read LLAY…IHAV and IAWA…YLIF. 2 PLD phosphodiesterase domains span residues 218–245 and 392–419; these read VNFR…GDEY and TPGF…DNRS. Catalysis depends on residues His223, Lys225, Asp230, His397, Lys399, and Asp404.

This sequence belongs to the phospholipase D family. Cardiolipin synthase subfamily. ClsA sub-subfamily.

The protein localises to the cell inner membrane. The enzyme catalyses 2 a 1,2-diacyl-sn-glycero-3-phospho-(1'-sn-glycerol) = a cardiolipin + glycerol. In terms of biological role, catalyzes the reversible phosphatidyl group transfer from one phosphatidylglycerol molecule to another to form cardiolipin (CL) (diphosphatidylglycerol) and glycerol. This is Cardiolipin synthase A from Pseudomonas fluorescens (strain SBW25).